The following is a 79-amino-acid chain: Small ribosomal subunit protein bS18B (79 aa).

The segment covering 1 to 11 (MPRPRKADRTP) has biased composition (basic and acidic residues). Residues 1–24 (MPRPRKADRTPARQRPNPLDRDGV) are disordered.

This sequence belongs to the bacterial ribosomal protein bS18 family. Part of the 30S ribosomal subunit. Forms a tight heterodimer with protein bS6.

Its function is as follows. Binds as a heterodimer with protein bS6 to the central domain of the 16S rRNA, where it helps stabilize the platform of the 30S subunit. This Streptomyces coelicolor (strain ATCC BAA-471 / A3(2) / M145) protein is Small ribosomal subunit protein bS18B.